A 341-amino-acid polypeptide reads, in one-letter code: 3-dehydroquinate synthase (341 aa).

NAD(+)-binding positions include 54 to 59 (DGEKYK), 88 to 92 (GVVTD), 112 to 113 (TT), lysine 125, lysine 133, and 151 to 154 (TLST). Residues glutamate 166, histidine 220, and histidine 236 each coordinate Zn(2+).

Belongs to the sugar phosphate cyclases superfamily. Dehydroquinate synthase family. It depends on NAD(+) as a cofactor. Co(2+) is required as a cofactor. Requires Zn(2+) as cofactor.

The protein localises to the cytoplasm. It catalyses the reaction 7-phospho-2-dehydro-3-deoxy-D-arabino-heptonate = 3-dehydroquinate + phosphate. The protein operates within metabolic intermediate biosynthesis; chorismate biosynthesis; chorismate from D-erythrose 4-phosphate and phosphoenolpyruvate: step 2/7. Functionally, catalyzes the conversion of 3-deoxy-D-arabino-heptulosonate 7-phosphate (DAHP) to dehydroquinate (DHQ). The protein is 3-dehydroquinate synthase of Thermococcus kodakarensis (strain ATCC BAA-918 / JCM 12380 / KOD1) (Pyrococcus kodakaraensis (strain KOD1)).